The sequence spans 217 residues: Transcriptional regulator NovE (217 aa).

The segment at 1–41 (MVASGRTASKGRGNGATPVRPTAGDATPVDSGQPSDTTYGG) is disordered.

In terms of biological role, transcription regulator that specifically regulates expression of genes involved in the novobiocin biosynthesis pathway. Probably acts as a positive regulator of transcription. Does not bind DNA. In Streptomyces niveus (Streptomyces spheroides), this protein is Transcriptional regulator NovE (novE).